We begin with the raw amino-acid sequence, 718 residues long: Manganese-exporting P-type ATPase (718 aa).

In terms of domain architecture, HMA spans 11 to 78 (GRMRVKVDWV…AIKGAAHVAA (68 aa)). A run of 6 helical transmembrane segments spans residues 87 to 105 (HSAEIRNTDVLRMVIGGVA), 128 to 146 (TVATGVTIFTGYPFLRGAL), 154 to 168 (AGTDALVSAATVASL), 177 to 191 (LTVLWLLNIGEYLQD), 327 to 351 (VGENFSRRFVPTSFIVSAIALLITG), and 357 to 375 (MTMLLIACPCAVGLSTPTA). The active-site 4-aspartylphosphate intermediate is the aspartate 408. 3 residues coordinate Mg(2+): aspartate 408, threonine 410, and aspartate 610. Helical transmembrane passes span 661 to 680 (AVDVIRQNYGMSIAVNAAGL) and 690 to 709 (PVLAAILHNASSVAVVANSS).

It belongs to the cation transport ATPase (P-type) (TC 3.A.3) family. Type IB subfamily.

It is found in the cell membrane. It catalyses the reaction Mn(2+)(in) + ATP + H2O = Mn(2+)(out) + ADP + phosphate + H(+). High affinity, slow turnover Mn(2+) transporting ATPase. This chain is Manganese-exporting P-type ATPase (ctpC), found in Mycobacterium bovis (strain ATCC BAA-935 / AF2122/97).